Here is a 267-residue protein sequence, read N- to C-terminus: MTKKIVLQIAYQGTSYSGWQYQPNALSIQEVLETILKKIAGFRISVISSGRTDAGVHAQGQIAHFHCPDHPHFTDPRQIQKMLNALLPHDIVIHDAVMTDGDFHSRFSAIAKEYRYTLSLLPKPLPHHRLFCFSPRYKLNIARMQEAAQYLVGTHDFASFANLGREYSSTIRTLYTLDLSEQEHLVTVICRGNGFLYKMVRNIVGALLDIGKGKYPPEHLLDMLATKDRRKGPPSAPPYGLSLHHVCYPPPYQWFCKHEHNNSSEGK.

Asp-53 (nucleophile) is an active-site residue. Tyr-114 is a binding site for substrate.

Belongs to the tRNA pseudouridine synthase TruA family. In terms of assembly, homodimer.

The enzyme catalyses uridine(38/39/40) in tRNA = pseudouridine(38/39/40) in tRNA. Its function is as follows. Formation of pseudouridine at positions 38, 39 and 40 in the anticodon stem and loop of transfer RNAs. This is tRNA pseudouridine synthase A from Chlamydia trachomatis serovar A (strain ATCC VR-571B / DSM 19440 / HAR-13).